A 245-amino-acid chain; its full sequence is Phosphoribosylaminoimidazole-succinocarboxamide synthase (245 aa).

This sequence belongs to the SAICAR synthetase family.

It carries out the reaction 5-amino-1-(5-phospho-D-ribosyl)imidazole-4-carboxylate + L-aspartate + ATP = (2S)-2-[5-amino-1-(5-phospho-beta-D-ribosyl)imidazole-4-carboxamido]succinate + ADP + phosphate + 2 H(+). Its pathway is purine metabolism; IMP biosynthesis via de novo pathway; 5-amino-1-(5-phospho-D-ribosyl)imidazole-4-carboxamide from 5-amino-1-(5-phospho-D-ribosyl)imidazole-4-carboxylate: step 1/2. The sequence is that of Phosphoribosylaminoimidazole-succinocarboxamide synthase from Acaryochloris marina (strain MBIC 11017).